We begin with the raw amino-acid sequence, 189 residues long: Ras-like protein 1 (189 aa).

10–17 lines the GTP pocket; that stretch reads GAGGVGKS. The Effector region motif lies at 32–40; the sequence is YDPTIEDSY. GTP contacts are provided by residues 57–61 and 116–119; these read DTAGQ and NKCD. A Cysteine methyl ester modification is found at cysteine 186. Cysteine 186 is lipidated: S-geranylgeranyl cysteine. The propeptide at 187–189 is removed in mature form; that stretch reads KML.

Belongs to the small GTPase superfamily. Ras family.

The protein resides in the cell membrane. The catalysed reaction is GTP + H2O = GDP + phosphate + H(+). Alternates between an inactive form bound to GDP and an active form bound to GTP. Activated by a guanine nucleotide-exchange factor (GEF) and inactivated by a GTPase-activating protein (GAP). Its function is as follows. Ras proteins bind GDP/GTP and possess intrinsic GTPase activity. Plays a role in eye development by regulating cell growth, survival of postmitotic ommatidial cells and differentiation of photoreceptor cells. During larval development, mediates Ptth/tor signaling leading to the production of ecdysone, a hormone required for the initiation of metamorphosis. In Drosophila grimshawi (Hawaiian fruit fly), this protein is Ras-like protein 1.